Consider the following 627-residue polypeptide: DNA mismatch repair protein MutL (627 aa).

Residues 363 to 397 form a disordered region; the sequence is FAEPAAREPVAPRYSPAPASGSRPAAPWPNAQPGY. A compositionally biased stretch (low complexity) spans 364–387; that stretch reads AEPAAREPVAPRYSPAPASGSRPA.

Belongs to the DNA mismatch repair MutL/HexB family.

In terms of biological role, this protein is involved in the repair of mismatches in DNA. It is required for dam-dependent methyl-directed DNA mismatch repair. May act as a 'molecular matchmaker', a protein that promotes the formation of a stable complex between two or more DNA-binding proteins in an ATP-dependent manner without itself being part of a final effector complex. This Shigella flexneri serotype 5b (strain 8401) protein is DNA mismatch repair protein MutL.